A 274-amino-acid polypeptide reads, in one-letter code: 2,3,4,5-tetrahydropyridine-2,6-dicarboxylate N-succinyltransferase (274 aa).

2 residues coordinate substrate: R105 and D142.

It belongs to the transferase hexapeptide repeat family. As to quaternary structure, homotrimer.

It localises to the cytoplasm. It catalyses the reaction (S)-2,3,4,5-tetrahydrodipicolinate + succinyl-CoA + H2O = (S)-2-succinylamino-6-oxoheptanedioate + CoA. Its pathway is amino-acid biosynthesis; L-lysine biosynthesis via DAP pathway; LL-2,6-diaminopimelate from (S)-tetrahydrodipicolinate (succinylase route): step 1/3. In Thiobacillus denitrificans (strain ATCC 25259 / T1), this protein is 2,3,4,5-tetrahydropyridine-2,6-dicarboxylate N-succinyltransferase.